The sequence spans 98 residues: NADH-ubiquinone oxidoreductase chain 4L (98 aa).

The next 3 helical transmembrane spans lie at 1–21 (MTTI…GVLI), 26–46 (LLST…LMAL), and 59–79 (APLI…ALLV).

It belongs to the complex I subunit 4L family. Core subunit of respiratory chain NADH dehydrogenase (Complex I) which is composed of 45 different subunits.

The protein resides in the mitochondrion inner membrane. The catalysed reaction is a ubiquinone + NADH + 5 H(+)(in) = a ubiquinol + NAD(+) + 4 H(+)(out). Core subunit of the mitochondrial membrane respiratory chain NADH dehydrogenase (Complex I) which catalyzes electron transfer from NADH through the respiratory chain, using ubiquinone as an electron acceptor. Part of the enzyme membrane arm which is embedded in the lipid bilayer and involved in proton translocation. The chain is NADH-ubiquinone oxidoreductase chain 4L (MT-ND4L) from Rhyncholestes raphanurus (Chilean shrew opossum).